We begin with the raw amino-acid sequence, 138 residues long: Acidic phospholipase A2 DsM-a2/DsM-a2' (138 aa).

Positions 1–16 (MRTLWIVAVCLIGVEG) are cleaved as a signal peptide. 7 disulfide bridges follow: cysteine 42-cysteine 131, cysteine 44-cysteine 60, cysteine 59-cysteine 111, cysteine 65-cysteine 138, cysteine 66-cysteine 104, cysteine 73-cysteine 97, and cysteine 91-cysteine 102. Ca(2+) is bound by residues tyrosine 43, glycine 45, and glycine 47. Histidine 63 is an active-site residue. Residue aspartate 64 coordinates Ca(2+). The active site involves aspartate 105.

This sequence belongs to the phospholipase A2 family. Group II subfamily. D49 sub-subfamily. Ca(2+) serves as cofactor. Expressed by the venom gland.

It localises to the secreted. It catalyses the reaction a 1,2-diacyl-sn-glycero-3-phosphocholine + H2O = a 1-acyl-sn-glycero-3-phosphocholine + a fatty acid + H(+). Its function is as follows. Exhibits high hydrolytic activities and shows strong preference for the anionic micelles (dPPC with deoxycholate) to the zwitterionic micelles (dPPC with Triton X-100). PLA2 catalyzes the calcium-dependent hydrolysis of the 2-acyl groups in 3-sn-phosphoglycerides. In Daboia siamensis (Eastern Russel's viper), this protein is Acidic phospholipase A2 DsM-a2/DsM-a2'.